We begin with the raw amino-acid sequence, 333 residues long: 3-isopropylmalate/3-methylmalate dehydrogenase (333 aa).

Substrate contacts are provided by arginine 81, arginine 91, arginine 112, and aspartate 203. Mg(2+)-binding residues include aspartate 203, aspartate 227, and aspartate 231. Residue 260–272 (GSAPDIAGKKIAN) coordinates NAD(+).

Belongs to the isocitrate and isopropylmalate dehydrogenases family. Homotetramer. Mg(2+) serves as cofactor. It depends on Mn(2+) as a cofactor.

It is found in the cytoplasm. It carries out the reaction (2R,3S)-3-isopropylmalate + NAD(+) = 4-methyl-2-oxopentanoate + CO2 + NADH. The enzyme catalyses (2R,3S)-3-methylmalate + NAD(+) = 2-oxobutanoate + CO2 + NADH. The catalysed reaction is (R)-malate + NAD(+) = pyruvate + CO2 + NADH. Its pathway is amino-acid biosynthesis; L-leucine biosynthesis; L-leucine from 3-methyl-2-oxobutanoate: step 3/4. It functions in the pathway amino-acid biosynthesis; L-isoleucine biosynthesis; 2-oxobutanoate from pyruvate: step 3/3. Functionally, catalyzes the oxidation of 3-carboxy-2-hydroxy-4-methylpentanoate (3-isopropylmalate) to 3-carboxy-4-methyl-2-oxopentanoate, which decarboxylates to 4-methyl-2-oxopentanoate (2-oxoisocaproate). Also catalyzes the oxidative decarboxylation of 3-methylmalate to 2-oxobutyrate, and that of D-malate to pyruvate. Cannot use NADP(+) instead of NAD(+). Cannot catalyze the oxidation of L-malate, L-tartrate, D-tartrate, DL-isocitrate, or DL-lactate. The sequence is that of 3-isopropylmalate/3-methylmalate dehydrogenase (leuB) from Methanocaldococcus jannaschii (strain ATCC 43067 / DSM 2661 / JAL-1 / JCM 10045 / NBRC 100440) (Methanococcus jannaschii).